A 414-amino-acid chain; its full sequence is Voltage-gated ClC-type chloride channel ClcB (414 aa).

Helical transmembrane passes span 5-25 (LVIS…FHQA), 54-74 (ALTP…YQRY), 116-136 (SAIG…SVFA), 147-167 (LWVA…PLAG), 169-189 (LFIA…PVVI), 220-240 (VQYF…PLFL), 255-275 (LLPP…SLIF), 292-312 (TPPG…AVLA), 327-347 (LFVG…WPVL), 353-373 (LLMA…APIM), and 381-401 (MTGE…ATTI).

It belongs to the chloride channel (TC 2.A.49) family. ClcB subfamily.

The protein localises to the cell inner membrane. In terms of biological role, probably acts as an electrical shunt for an outwardly-directed proton pump that is linked to amino acid decarboxylation, as part of the extreme acid resistance (XAR) response. This is Voltage-gated ClC-type chloride channel ClcB from Yersinia pestis.